A 620-amino-acid polypeptide reads, in one-letter code: Chaperone protein HscA homolog (620 aa).

This sequence belongs to the heat shock protein 70 family.

Functionally, chaperone involved in the maturation of iron-sulfur cluster-containing proteins. Has a low intrinsic ATPase activity which is markedly stimulated by HscB. In Bordetella petrii (strain ATCC BAA-461 / DSM 12804 / CCUG 43448), this protein is Chaperone protein HscA homolog.